A 455-amino-acid polypeptide reads, in one-letter code: MKKQTQLLSALALSVGLTLSASFQAVASIPGQVADQAPLPSLAPMLEKVLPAVVSVRVEGTASQGQKIPEEFKKFFGDDLPDQPAQPFEGLGSGVIINASKGYVLTNNHVINQAQKISIQLNDGREFDAKLIGSDDQSDIALLQIQNPSKLTQIAIADSDKLRVGDFAVAVGNPFGLGQTATSGIVSALGRSGLNLEGLENFIQTDASINRGNSGGALLNLNGELIGINTAILAPGGGSVGIGFAIPSNMARTLAQQLIDFGEIKRGLLGIKGTEMSADIAKAFNLDVQRGAFVSEVLPGSGSAKAGVKAGDIITSLNGKPLNSFAELRSRIATTEPGTKVKLGLLRNGKPLEVEVTLDTSTSSSASAEMITPALEGATLSDGQLKDGGKGIKIDEVVKGSPAAQAGLQKDDVIIGVNRDRVNSIAEMRKVLAAKPAIIALQIVRGNESIYLLMR.

An N-terminal signal peptide occupies residues 1–27 (MKKQTQLLSALALSVGLTLSASFQAVA). Substrate is bound by residues E59, H109, D139, G212, 212-214 (GNS), 230-234 (TAILA), and 269-273 (LGIKG). Catalysis depends on charge relay system residues H109 and D139. The Charge relay system role is filled by S214. 2 PDZ domains span residues 258–349 (LIDF…LRNG) and 355–447 (EVTL…VRGN).

The protein belongs to the peptidase S1C family. As to quaternary structure, degQ can reversibly switch between different oligomeric forms that represent inactive (6-mer) and active (12- and 24-mer) protease states. Substrate binding triggers the conversion of the resting DegQ trimer and hexamer into catalytically active 12- and 24-mers. The conversion of 6-mer (DegQ6) into 12-mer (DegQ12) or 24-mer (DegQ24) is crucial in regulating protease activity.

It is found in the periplasm. The enzyme catalyses Acts on substrates that are at least partially unfolded. The cleavage site P1 residue is normally between a pair of hydrophobic residues, such as Val-|-Val.. With respect to regulation, inhibited by diisopropylfluorophosphate (DFP). In terms of biological role, degQ could degrade transiently denatured and unfolded proteins which accumulate in the periplasm following stress conditions. DegQ is efficient with Val-Xaa and Ile-Xaa peptide bonds, suggesting a preference for a beta-branched side chain amino acids. Only unfolded proteins devoid of disulfide bonds appear capable to be cleaved, thereby preventing non-specific proteolysis of folded proteins. DegQ can substitute for the periplasmic protease DegP. The sequence is that of Periplasmic pH-dependent serine endoprotease DegQ (degQ) from Escherichia coli (strain K12).